The chain runs to 257 residues: GTP cyclohydrolase FolE2 (257 aa).

It belongs to the GTP cyclohydrolase IV family.

The catalysed reaction is GTP + H2O = 7,8-dihydroneopterin 3'-triphosphate + formate + H(+). Its pathway is cofactor biosynthesis; 7,8-dihydroneopterin triphosphate biosynthesis; 7,8-dihydroneopterin triphosphate from GTP: step 1/1. Its function is as follows. Converts GTP to 7,8-dihydroneopterin triphosphate. In Kosmotoga olearia (strain ATCC BAA-1733 / DSM 21960 / TBF 19.5.1), this protein is GTP cyclohydrolase FolE2.